The primary structure comprises 202 residues: Large ribosomal subunit protein bL25 (202 aa).

Belongs to the bacterial ribosomal protein bL25 family. CTC subfamily. In terms of assembly, part of the 50S ribosomal subunit; part of the 5S rRNA/L5/L18/L25 subcomplex. Contacts the 5S rRNA. Binds to the 5S rRNA independently of L5 and L18.

Its function is as follows. This is one of the proteins that binds to the 5S RNA in the ribosome where it forms part of the central protuberance. This Clostridium perfringens (strain ATCC 13124 / DSM 756 / JCM 1290 / NCIMB 6125 / NCTC 8237 / Type A) protein is Large ribosomal subunit protein bL25.